Reading from the N-terminus, the 170-residue chain is Tachykinin-4 (170 aa).

Residues 1–16 (MLPLLALFLLIGPAVS) form the signal peptide. A propeptide spanning residues 17–54 (TTTRDREDLTFGAEAESWVTVNLKGIPVPSIELKLQEL) is cleaved from the precursor. Residue methionine 66 is modified to Methionine amide. The propeptide occupies 67 to 170 (GKRVEGVHPI…SQMMPRPSRP (104 aa)). Residues 107–170 (QETNHQSAGP…SQMMPRPSRP (64 aa)) are disordered. Polar residues predominate over residues 123 to 140 (SLQSQRGRSEPPNHQQHV).

Belongs to the tachykinin family.

Its subcellular location is the secreted. In terms of biological role, tachykinins are active peptides which excite neurons, evoke behavioral responses, are potent vasodilators and secretagogues, and contract (directly or indirectly) many smooth muscles. Hemokinin induces plasma extravasation, mast cell degranulation, muscle contraction, salivary secretion and scratching behavior. Increases sperm motility. Induces potent analgesic effects and may play a role in pain modulation. Promotes survival of bone marrow B lineage cells and of cultured LPS-stimulated pre-B cells and may act as an autocrine factor required for B-cell survival and proliferation. Lowers systemic arterial pressure following intravenous injection. Induces interferon-gamma production and may play a role in the inflammatory response. Shows potent affinity and specificity for the NK-1 receptor. This is Tachykinin-4 from Rattus norvegicus (Rat).